A 3933-amino-acid polypeptide reads, in one-letter code: Circularly permutated Ras protein 2 (3933 aa).

A coiled-coil region spans residues 12–46 (VHEVKKQELESILLQQEQEKQAKEEKESIKDTDDK). Disordered stretches follow at residues 23–101 (ILLQ…IEKK), 136–189 (DIRE…RKET), 1022–1054 (ITTT…TTTT), and 2817–2839 (NNNN…RPTR). A compositionally biased stretch (basic and acidic residues) spans 28–62 (EQEKQAKEEKESIKDTDDKPIEDTEHSTNNDKPIE). A compositionally biased stretch (low complexity) spans 70-92 (TPTTTTTTKPTDEASSSSNNNNN). Residues 136–145 (DIREPTDKPF) are compositionally biased toward basic and acidic residues. Polar residues predominate over residues 146 to 156 (ENTSNIETTRQ). Positions 167 to 215 (KTEAERLEQEQKQKQYDENRKETDRKLELELERLKNKKEEVEQIRAYFQ) form a coiled coil. A compositionally biased stretch (basic and acidic residues) spans 168 to 189 (TEAERLEQEQKQKQYDENRKET). Residues 2817 to 2826 (NNNNNNNRYN) are compositionally biased toward low complexity. Residues 2853-2857 (DTAGQ), 2913-2916 (TKAD), and 2976-2983 (GDGGIGKS) contribute to the GTP site. 3 disordered regions span residues 3036 to 3086 (LQSA…LSSR), 3107 to 3142 (RKSS…QDYE), and 3733 to 3754 (VIEP…PSSS). Residues 3070-3086 (PSSSSTRTSVSTSLSSR) are compositionally biased toward low complexity. A compositionally biased stretch (basic and acidic residues) spans 3107–3120 (RKSSLVEEESKRQY). Residues 3121 to 3141 (DDDDESKSESSEYDDDDDQDY) show a composition bias toward acidic residues.

The protein belongs to the small GTPase superfamily. CpRas family.

This chain is Circularly permutated Ras protein 2 (cpras2), found in Dictyostelium discoideum (Social amoeba).